The primary structure comprises 397 residues: Protein-glutamate methylesterase/protein-glutamine glutaminase of group 2 operon (397 aa).

One can recognise a Response regulatory domain in the interval 21–139 (RVMIVDDSVV…EASAADTFHH (119 aa)). Residue D72 is modified to 4-aspartylphosphate. Residues 199–388 (PFSTLAPKVL…LPLNQIGAKV (190 aa)) enclose the CheB-type methylesterase domain. Active-site residues include S213, H241, and D337.

The protein belongs to the CheB family. In terms of processing, phosphorylated by CheA. Phosphorylation of the N-terminal regulatory domain activates the methylesterase activity.

It localises to the cytoplasm. It catalyses the reaction [protein]-L-glutamate 5-O-methyl ester + H2O = L-glutamyl-[protein] + methanol + H(+). It carries out the reaction L-glutaminyl-[protein] + H2O = L-glutamyl-[protein] + NH4(+). Its function is as follows. Involved in chemotaxis. Part of a chemotaxis signal transduction system that modulates chemotaxis in response to various stimuli. Catalyzes the demethylation of specific methylglutamate residues introduced into the chemoreceptors (methyl-accepting chemotaxis proteins or MCP) by CheR. Also mediates the irreversible deamidation of specific glutamine residues to glutamic acid. This chain is Protein-glutamate methylesterase/protein-glutamine glutaminase of group 2 operon, found in Bradyrhizobium diazoefficiens (strain JCM 10833 / BCRC 13528 / IAM 13628 / NBRC 14792 / USDA 110).